Reading from the N-terminus, the 384-residue chain is Putative RNA methyltransferase slr0064 (384 aa).

In terms of domain architecture, THUMP spans 53 to 164 (LLYRINLWSR…QNHCQLSLDS (112 aa)).

It belongs to the methyltransferase superfamily.

This is Putative RNA methyltransferase slr0064 from Synechocystis sp. (strain ATCC 27184 / PCC 6803 / Kazusa).